We begin with the raw amino-acid sequence, 321 residues long: tRNA(Ile)-lysidine synthase (321 aa).

Residue 21-26 (SYGSDS) coordinates ATP.

The protein belongs to the tRNA(Ile)-lysidine synthase family.

It is found in the cytoplasm. It carries out the reaction cytidine(34) in tRNA(Ile2) + L-lysine + ATP = lysidine(34) in tRNA(Ile2) + AMP + diphosphate + H(+). In terms of biological role, ligates lysine onto the cytidine present at position 34 of the AUA codon-specific tRNA(Ile) that contains the anticodon CAU, in an ATP-dependent manner. Cytidine is converted to lysidine, thus changing the amino acid specificity of the tRNA from methionine to isoleucine. This is tRNA(Ile)-lysidine synthase from Campylobacter jejuni subsp. jejuni serotype O:2 (strain ATCC 700819 / NCTC 11168).